The following is a 446-amino-acid chain: NAD kinase (446 aa).

Phosphoserine is present on residues S46, S48, S50, S55, and S64.

Belongs to the NAD kinase family. Requires a divalent metal cation as cofactor. In terms of tissue distribution, widely expressed but not detected in skeletal muscle.

The catalysed reaction is NAD(+) + ATP = ADP + NADP(+) + H(+). This chain is NAD kinase (NADK), found in Homo sapiens (Human).